A 257-amino-acid chain; its full sequence is Pantothenate synthetase (257 aa).

ATP is bound at residue 29–36 (MGNLHAGH). The active-site Proton donor is the His-36. A (R)-pantoate-binding site is contributed by Gln-60. Gln-60 serves as a coordination point for beta-alanine. 145-148 (GEKD) is a binding site for ATP. Gln-151 is a (R)-pantoate binding site. ATP is bound by residues Val-174 and 182–185 (LSSR).

This sequence belongs to the pantothenate synthetase family. In terms of assembly, homodimer.

It is found in the cytoplasm. The enzyme catalyses (R)-pantoate + beta-alanine + ATP = (R)-pantothenate + AMP + diphosphate + H(+). It functions in the pathway cofactor biosynthesis; (R)-pantothenate biosynthesis; (R)-pantothenate from (R)-pantoate and beta-alanine: step 1/1. Functionally, catalyzes the condensation of pantoate with beta-alanine in an ATP-dependent reaction via a pantoyl-adenylate intermediate. The polypeptide is Pantothenate synthetase (Coxiella burnetii (strain CbuK_Q154) (Coxiella burnetii (strain Q154))).